Consider the following 582-residue polypeptide: Leucine-rich repeat transmembrane neuronal protein 3 (582 aa).

The N-terminal stretch at 1-30 is a signal peptide; that stretch reads MGFNVIRLLRGSAVAVVLAPTVLLTMLSSA. The 31-residue stretch at 31–61 folds into the LRRNT domain; the sequence is ERGCPKGCRCEGKMVYCESQKLQEIPSSISA. At 31-420 the chain is on the extracellular side; it reads ERGCPKGCRC…VDTEHISFHK (390 aa). LRR repeat units lie at residues 63–83, 86–107, 110–131, 134–155, 158–179, 182–203, 206–226, 230–251, 254–275, and 279–300; these read CLGL…QFKG, QLTW…AFNG, RLKE…TFRP, NLRN…QFRG, KLLS…IFQD, NLEL…VFAG, RLKE…ALFP, SLQN…MSWT, SLQR…SVFQ, and NLQR…ILDS. Asn-126 carries N-linked (GlcNAc...) asparagine glycosylation. One can recognise an LRRCT domain in the interval 312-363; that stretch reads NIWECSRNICSLVNWLRSFKGLRENTIICASPKELQGVNVIDAVKNYSICGK. N-linked (GlcNAc...) asparagine glycosylation is present at Asn-357. Residues 378 to 410 form a disordered region; sequence KPTFKPKLPRPKHESKPPLPPTVGATEPSPETD. Residues 421-441 traverse the membrane as a helical segment; the sequence is IIAGSVALFLSVLVILLVMYV. Over 442 to 582 the chain is Cytoplasmic; sequence SWKRYPASMK…RISDHKPQLA (141 aa).

This sequence belongs to the LRRTM family. Expressed in neuronal tissues.

It localises to the cell membrane. The protein resides in the postsynaptic cell membrane. Functionally, may play a role in the development and maintenance of the vertebrate nervous system. Exhibits a limited synaptogenic activity in vitro, restricted to excitatory presynaptic differentiation. This chain is Leucine-rich repeat transmembrane neuronal protein 3 (Lrrtm3), found in Mus musculus (Mouse).